We begin with the raw amino-acid sequence, 334 residues long: Glycerol-3-phosphate dehydrogenase [NAD(P)+] (334 aa).

Positions 13, 33, and 106 each coordinate NADPH. Residues Lys-106, Gly-137, and Ser-139 each coordinate sn-glycerol 3-phosphate. Ala-141 lines the NADPH pocket. 5 residues coordinate sn-glycerol 3-phosphate: Lys-192, Asp-245, Ser-255, Arg-256, and Asn-257. Lys-192 functions as the Proton acceptor in the catalytic mechanism. Position 256 (Arg-256) interacts with NADPH. Residues Val-280 and Glu-282 each contribute to the NADPH site.

Belongs to the NAD-dependent glycerol-3-phosphate dehydrogenase family.

The protein resides in the cytoplasm. It carries out the reaction sn-glycerol 3-phosphate + NAD(+) = dihydroxyacetone phosphate + NADH + H(+). The catalysed reaction is sn-glycerol 3-phosphate + NADP(+) = dihydroxyacetone phosphate + NADPH + H(+). The protein operates within membrane lipid metabolism; glycerophospholipid metabolism. In terms of biological role, catalyzes the reduction of the glycolytic intermediate dihydroxyacetone phosphate (DHAP) to sn-glycerol 3-phosphate (G3P), the key precursor for phospholipid synthesis. The chain is Glycerol-3-phosphate dehydrogenase [NAD(P)+] from Chlamydia trachomatis serovar L2 (strain ATCC VR-902B / DSM 19102 / 434/Bu).